Here is a 408-residue protein sequence, read N- to C-terminus: MRSSCVLLAALLALVAYYVYIPLPSAVSDPWKLMLLDATFRGAQQVSNLIHSLGLSHHLITLNFIIISFGKKSARSSPRVKVTDTDFDGVEVRVFEGPPKPDEPLRRSVVYIHGGGWALASAKISYYDQLCTAMAEELNAVIVSIEYRLVPQVYFPEQIHDVIRATKYFLQPEVLDKYKVDPGRVGVSGDSAGGNLAAALGQQFTYVESLKNKLKLQALIYPVLQALDFNTPSYQQSMNTPILPRHVMVRYWVDYFKGNYDFVEAMIVNNHTSLDVERAAALRARLDWTSLLPSSIKKNYKPVLQTIGDARIVKEIPQLLDAAASPLIAEQEVLQALPKTYILTCEHDVLRDDGIMYAKRLESAGVNVTLDHFEDGFHGCMIFTSWPTNFSVGIRTRDSYFKWLDQNL.

Over 1–4 the chain is Cytoplasmic; the sequence is MRSS. Residues 5–25 form a helical; Signal-anchor for type II membrane protein membrane-spanning segment; it reads CVLLAALLALVAYYVYIPLPS. Residues 26–408 lie on the Lumenal side of the membrane; it reads AVSDPWKLML…SYFKWLDQNL (383 aa). Positions 113-115 match the Involved in the stabilization of the negatively charged intermediate by the formation of the oxyanion hole motif; sequence HGG. Ser-191 is a catalytic residue. Asn-270 is a glycosylation site (N-linked (GlcNAc...) asparagine). Asp-348 is a catalytic residue. N-linked (GlcNAc...) asparagine glycosylation occurs at Asn-367. The active site involves His-378. A glycan (N-linked (GlcNAc...) asparagine) is linked at Asn-389.

The protein belongs to the 'GDXG' lipolytic enzyme family. In terms of processing, N-glycosylated.

It localises to the cell membrane. It is found in the microsome. It carries out the reaction a 1-O-alkyl-2-acetyl-sn-glycerol + H2O = a 1-O-alkyl-sn-glycerol + acetate + H(+). The catalysed reaction is 1-O-hexadecyl-2-acetyl-sn-glycerol + H2O = 1-O-hexadecyl-sn-glycerol + acetate + H(+). It catalyses the reaction a cholesterol ester + H2O = cholesterol + a fatty acid + H(+). The enzyme catalyses cholesteryl (9Z-octadecenoate) + H2O = cholesterol + (9Z)-octadecenoate + H(+). Its function is as follows. Hydrolyzes 2-acetyl monoalkylglycerol ether (1-O-alkyl-2-acetyl-sn-glycerol), the penultimate precursor of the pathway for de novo synthesis of platelet-activating factor. May be responsible for the hydrolysis of cholesterol esters (such as cholesteryl (9Z-octadecenoate)) in macrophages. Also involved in organ detoxification by hydrolyzing exogenous organophosphorus compounds. The chain is Neutral cholesterol ester hydrolase 1 (Nceh1) from Rattus norvegicus (Rat).